The sequence spans 546 residues: MTINQLIVIGGGIAGLTCAESYSHLKPNDKVTILSCSPILKTVCNVQKISKVLESFEVFETQFTDIEFKNPNISVIICDVDSIDINNRIVKTDKGNFKYDYLSICSGAKPNLVKESPYLIGIRDTETIVDLKNRLSNAKRIVIVGNGGIALELIHEIKNCQIIWSIKDKHIGNAFFDKDAADFLFRSKQIIDDDNHDKKNVVKEQQQQQQKDGILLNEDELIAKNQNISSQSNSSLYKSESGSALGPQWYSKYNFKTTDQYNKNNQEKKYNFNENVNIQYSTFLDEIYSNHDKKLNQEIINNNNNGDGDDKEDWPIYVKLSNGNLFGCNFIISATGVIPNSTILTKDNNNNNNNKIIKLSNEGAIIVDEQMKTSVDRIYSAGDVCSIEWSESEVWFQMRLWSQARTQGRYTAQCIANESVKNTPQQDNLDQICTNFEFELFAHATKFFGFKVIMLGLYNAQGLNLNLDNNNQNEENQDNIKIYTREIIGEQYVKVILKNGRLIGSLLIGDTDLEETFENLILNQIDLSGYGAEILNPEIDIEDYFD.

It belongs to the class-I pyridine nucleotide-disulfide oxidoreductase family. PYROXD1 subfamily. FAD serves as cofactor.

The sequence is that of Pyridine nucleotide-disulfide oxidoreductase domain-containing protein 1 (pyroxd1) from Dictyostelium discoideum (Social amoeba).